The primary structure comprises 554 residues: Arginine--tRNA ligase (554 aa).

The short motif at 132 to 142 (ANPTGPLHIGH) is the 'HIGH' region element.

The protein belongs to the class-I aminoacyl-tRNA synthetase family. As to quaternary structure, monomer.

It localises to the cytoplasm. It catalyses the reaction tRNA(Arg) + L-arginine + ATP = L-arginyl-tRNA(Arg) + AMP + diphosphate. The protein is Arginine--tRNA ligase of Pseudarthrobacter chlorophenolicus (strain ATCC 700700 / DSM 12829 / CIP 107037 / JCM 12360 / KCTC 9906 / NCIMB 13794 / A6) (Arthrobacter chlorophenolicus).